A 317-amino-acid polypeptide reads, in one-letter code: Anamorsin homolog 2 (317 aa).

Positions 1 to 162 (MAKKVGVLLF…KPSWDSASVF (162 aa)) are N-terminal SAM-like domain. Residues 163–229 (QLRKGSSQKG…EDDLLTEEDL (67 aa)) form a linker region. The [2Fe-2S] cluster site is built by C240, C247, C250, and C252. The fe-S binding site A stretch occupies residues 240–252 (CAPTKKACKNCTC). Positions 278, 281, 289, and 292 each coordinate [4Fe-4S] cluster. 2 short sequence motifs (cx2C motif) span residues 278 to 281 (CGSC) and 289 to 292 (CAGC). The segment at 278–292 (CGSCGLGDAFRCAGC) is fe-S binding site B.

Belongs to the anamorsin family. Monomer. Requires [2Fe-2S] cluster as cofactor. [4Fe-4S] cluster is required as a cofactor.

It localises to the cytoplasm. The protein localises to the mitochondrion intermembrane space. Its function is as follows. Component of the cytosolic iron-sulfur (Fe-S) protein assembly (CIA) machinery. Required for the maturation of extramitochondrial Fe-S proteins. Part of an electron transfer chain functioning in an early step of cytosolic Fe-S biogenesis, facilitating the de novo assembly of a [4Fe-4S] cluster on the cytosolic Fe-S scaffold complex. Electrons are transferred from NADPH via a FAD- and FMN-containing diflavin oxidoreductase. Together with the diflavin oxidoreductase, also required for the assembly of the diferric tyrosyl radical cofactor of ribonucleotide reductase (RNR), probably by providing electrons for reduction during radical cofactor maturation in the catalytic small subunit. This is Anamorsin homolog 2 from Physcomitrium patens (Spreading-leaved earth moss).